The primary structure comprises 205 residues: Probable GTP-binding protein EngB (205 aa).

Positions 29 to 203 (QGAEIAFIGR…KAVLSQWFSS (175 aa)) constitute an EngB-type G domain. GTP contacts are provided by residues 37-44 (GRSNAGKS), 64-68 (GRTQM), 82-85 (DLPG), 149-152 (TKSD), and 182-184 (FSS). Residues S44 and T66 each contribute to the Mg(2+) site.

The protein belongs to the TRAFAC class TrmE-Era-EngA-EngB-Septin-like GTPase superfamily. EngB GTPase family. It depends on Mg(2+) as a cofactor.

Necessary for normal cell division and for the maintenance of normal septation. This is Probable GTP-binding protein EngB from Coxiella burnetii (strain CbuK_Q154) (Coxiella burnetii (strain Q154)).